The sequence spans 281 residues: CMT1A duplicated region transcript 15 protein-like protein (281 aa).

Disordered stretches follow at residues 107-131 (KPAW…DQPS) and 150-187 (AENV…HGGG). The span at 108 to 120 (PAWEEPPPERALE) shows a compositional bias: basic and acidic residues. A compositionally biased stretch (low complexity) spans 165-178 (STAPASRSHAAPSP). Residues 207 to 227 (AGTTALLLQGLFIVLILVGYI) traverse the membrane as a helical segment.

The protein resides in the membrane. This is CMT1A duplicated region transcript 15 protein-like protein (CDRT15L2) from Homo sapiens (Human).